Reading from the N-terminus, the 131-residue chain is ATP synthase lipid-binding protein, mitochondrial (131 aa).

Residues 1 to 56 constitute a mitochondrion transit peptide; that stretch reads MLSAARLIAPAARSAIFSNAAVVRPLAAVSTQTQLVPAAPAQLSAVRSFQTTSVTK. A helical membrane pass occupies residues 72-92; the sequence is VGVAGSGAGIGTVFGSLIIGY. Position 99 is an N6,N6,N6-trimethyllysine (Lys-99). A helical transmembrane segment spans residues 107 to 127; that stretch reads ILGFALSEAMGLFCLMMAFLL.

This sequence belongs to the ATPase C chain family. F-type ATPases have 2 components, CF(1) - the catalytic core - and CF(0) - the membrane proton channel. CF(1) has five subunits: alpha(3), beta(3), gamma(1), delta(1), epsilon(1). CF(0) has three main subunits: a, b and c. Trimethylated by ATPSCKMT at Lys-99. Methylation may be required for proper incorporation of the C subunit into the ATP synthase complex and mitochondrial respiration.

It localises to the mitochondrion membrane. Its function is as follows. Mitochondrial membrane ATP synthase (F(1)F(0) ATP synthase or Complex V) produces ATP from ADP in the presence of a proton gradient across the membrane which is generated by electron transport complexes of the respiratory chain. F-type ATPases consist of two structural domains, F(1) - containing the extramembraneous catalytic core and F(0) - containing the membrane proton channel, linked together by a central stalk and a peripheral stalk. During catalysis, ATP synthesis in the catalytic domain of F(1) is coupled via a rotary mechanism of the central stalk subunits to proton translocation. Part of the complex F(0) domain. A homomeric c-ring of probably 10 subunits is part of the complex rotary element. This is ATP synthase lipid-binding protein, mitochondrial from Manduca sexta (Tobacco hawkmoth).